A 209-amino-acid polypeptide reads, in one-letter code: MKYNHTVDYGLYLVSDRDVLKGRDFIKSLEEAILGGATIVQLREKEASSLEFYQLALKAKALTEKYNVPLIINDRVDIALAVDADGVHVGQSDLPAHIVRSMIGQNKILGVSTATLEESKKAAEDGADYIGVGALFPTGTKTDANPVTLDQLRYIKENMDIPVVGIGGICEDNIKTIMEVGIDGVAIVSAILGKENIKEAAESLKASIK.

4-amino-2-methyl-5-(diphosphooxymethyl)pyrimidine-binding positions include 41-45 (QLREK) and asparagine 73. Residues aspartate 74 and aspartate 93 each coordinate Mg(2+). Serine 112 provides a ligand contact to 4-amino-2-methyl-5-(diphosphooxymethyl)pyrimidine. Residue 138 to 140 (TGT) participates in 2-[(2R,5Z)-2-carboxy-4-methylthiazol-5(2H)-ylidene]ethyl phosphate binding. Lysine 141 serves as a coordination point for 4-amino-2-methyl-5-(diphosphooxymethyl)pyrimidine. 2-[(2R,5Z)-2-carboxy-4-methylthiazol-5(2H)-ylidene]ethyl phosphate contacts are provided by residues glycine 168 and 188–189 (VS).

It belongs to the thiamine-phosphate synthase family. Requires Mg(2+) as cofactor.

It catalyses the reaction 2-[(2R,5Z)-2-carboxy-4-methylthiazol-5(2H)-ylidene]ethyl phosphate + 4-amino-2-methyl-5-(diphosphooxymethyl)pyrimidine + 2 H(+) = thiamine phosphate + CO2 + diphosphate. The enzyme catalyses 2-(2-carboxy-4-methylthiazol-5-yl)ethyl phosphate + 4-amino-2-methyl-5-(diphosphooxymethyl)pyrimidine + 2 H(+) = thiamine phosphate + CO2 + diphosphate. The catalysed reaction is 4-methyl-5-(2-phosphooxyethyl)-thiazole + 4-amino-2-methyl-5-(diphosphooxymethyl)pyrimidine + H(+) = thiamine phosphate + diphosphate. It participates in cofactor biosynthesis; thiamine diphosphate biosynthesis; thiamine phosphate from 4-amino-2-methyl-5-diphosphomethylpyrimidine and 4-methyl-5-(2-phosphoethyl)-thiazole: step 1/1. In terms of biological role, condenses 4-methyl-5-(beta-hydroxyethyl)thiazole monophosphate (THZ-P) and 2-methyl-4-amino-5-hydroxymethyl pyrimidine pyrophosphate (HMP-PP) to form thiamine monophosphate (TMP). In Alkaliphilus oremlandii (strain OhILAs) (Clostridium oremlandii (strain OhILAs)), this protein is Thiamine-phosphate synthase.